The primary structure comprises 975 residues: Importin-11 (975 aa).

Met1 is subject to N-acetylmethionine. The Importin N-terminal domain occupies 28-100 (AEEQLKQWET…RAGLITNFNE (73 aa)). HEAT repeat units lie at residues 123 to 160 (RQWP…TLAS), 283 to 317 (QHPI…ERFI), 318 to 356 (VQCM…KMAF), 422 to 459 (QTLT…AVGL), 473 to 509 (WFKT…VKFK), 511 to 548 (DLRP…DFEF), 555 to 593 (PYLE…RVNV), 600 to 636 (GCLV…GLGA), 640 to 677 (NLYP…TLEN), 683 to 720 (PELL…SSTE), 731 to 773 (QSFY…ILPC), 819 to 849 (QEMD…KLSA), 850 to 887 (LALL…EDPE), and 957 to 974 (METV…FLQG). The residue at position 343 (Ser343) is a Phosphoserine.

The protein belongs to the importin beta family. In terms of assembly, interacts with UBE2E3 and RPL12.

Its subcellular location is the cytoplasm. It is found in the nucleus. Functionally, functions in nuclear protein import as nuclear transport receptor. Serves as receptor for nuclear localization signals (NLS) in cargo substrates. Is thought to mediate docking of the importin/substrate complex to the nuclear pore complex (NPC) through binding to nucleoporin and the complex is subsequently translocated through the pore by an energy requiring, Ran-dependent mechanism. At the nucleoplasmic side of the NPC, Ran binds to the importin, the importin/substrate complex dissociates and importin is re-exported from the nucleus to the cytoplasm where GTP hydrolysis releases Ran. The directionality of nuclear import is thought to be conferred by an asymmetric distribution of the GTP- and GDP-bound forms of Ran between the cytoplasm and nucleus. Mediates the nuclear import of RPL12, and of UBE2E3. The protein is Importin-11 (Ipo11) of Mus musculus (Mouse).